The chain runs to 209 residues: Na(+)-translocating NADH-quinone reductase subunit D (209 aa).

Helical transmembrane passes span 42–62 (LVMT…ISLI), 70–90 (VRII…DQIL), 103–123 (VFVG…AYAM), 131–151 (FMDG…VGFV), and 178–198 (NGLF…IWGL).

Belongs to the NqrDE/RnfAE family. In terms of assembly, composed of six subunits; NqrA, NqrB, NqrC, NqrD, NqrE and NqrF.

It is found in the cell inner membrane. The enzyme catalyses a ubiquinone + n Na(+)(in) + NADH + H(+) = a ubiquinol + n Na(+)(out) + NAD(+). In terms of biological role, NQR complex catalyzes the reduction of ubiquinone-1 to ubiquinol by two successive reactions, coupled with the transport of Na(+) ions from the cytoplasm to the periplasm. NqrA to NqrE are probably involved in the second step, the conversion of ubisemiquinone to ubiquinol. In Yersinia enterocolitica serotype O:8 / biotype 1B (strain NCTC 13174 / 8081), this protein is Na(+)-translocating NADH-quinone reductase subunit D.